We begin with the raw amino-acid sequence, 130 residues long: Small ribosomal subunit protein uS11c (130 aa).

It belongs to the universal ribosomal protein uS11 family. As to quaternary structure, part of the 30S ribosomal subunit.

It localises to the plastid. It is found in the chloroplast. This chain is Small ribosomal subunit protein uS11c, found in Phaeodactylum tricornutum (strain CCAP 1055/1).